A 227-amino-acid chain; its full sequence is NDR1/HIN1-like protein 10 (227 aa).

The helical transmembrane segment at 42–62 (VKVIISLIVILGVAALIFWLI) threads the bilayer. N-linked (GlcNAc...) asparagine glycans are attached at residues Asn138 and Asn210.

As to expression, expressed in senescing leaves.

It localises to the cell membrane. Functionally, may play a role in plant immunity. The chain is NDR1/HIN1-like protein 10 from Arabidopsis thaliana (Mouse-ear cress).